The following is a 324-amino-acid chain: Transmembrane protein 171 (324 aa).

The next 4 helical transmembrane spans lie at 22–42 (IFCF…LSIF), 57–77 (MVLK…VILA), 113–133 (LIFG…GIWV), and 160–180 (FLSL…FFVV). Positions 229–239 (PESSASAVAES) are enriched in low complexity. Disordered regions lie at residues 229-248 (PESS…LLPN) and 279-304 (YTIS…PPRY). Residues 279-291 (YTISGTNSSSEAS) are compositionally biased toward polar residues.

It localises to the membrane. This Homo sapiens (Human) protein is Transmembrane protein 171 (TMEM171).